Reading from the N-terminus, the 122-residue chain is Flagellar protein FliT (122 aa).

Residues 1 to 50 form a required for homodimerization region; that stretch reads MTSTVEFINRWQRIALLSQSLLELAQRGEWDLLLQQEVSYLQSIETVMEK. The segment at 60–98 is fliD binding; it reads IQDMVAGYIKQTLDNEQLLKGLLQQRLDELSSLIGQSTR.

This sequence belongs to the FliT family. Homodimer. Interacts with FliD and FlhC.

It is found in the cytoplasm. The protein localises to the cytosol. Dual-function protein that regulates the transcription of class 2 flagellar operons and that also acts as an export chaperone for the filament-capping protein FliD. As a transcriptional regulator, acts as an anti-FlhDC factor; it directly binds FlhC, thus inhibiting the binding of the FlhC/FlhD complex to class 2 promoters, resulting in decreased expression of class 2 flagellar operons. As a chaperone, effects FliD transition to the membrane by preventing its premature polymerization, and by directing it to the export apparatus. The sequence is that of Flagellar protein FliT from Salmonella schwarzengrund (strain CVM19633).